The following is a 617-amino-acid chain: 1-deoxy-D-xylulose-5-phosphate synthase (617 aa).

Thiamine diphosphate is bound by residues His-76 and 117 to 119 (GHS). Asp-148 contacts Mg(2+). Residues 149–150 (GA), Asn-177, Tyr-285, and Glu-366 each bind thiamine diphosphate. Residue Asn-177 participates in Mg(2+) binding.

Belongs to the transketolase family. DXPS subfamily. As to quaternary structure, homodimer. Mg(2+) is required as a cofactor. It depends on thiamine diphosphate as a cofactor.

The enzyme catalyses D-glyceraldehyde 3-phosphate + pyruvate + H(+) = 1-deoxy-D-xylulose 5-phosphate + CO2. Its pathway is metabolic intermediate biosynthesis; 1-deoxy-D-xylulose 5-phosphate biosynthesis; 1-deoxy-D-xylulose 5-phosphate from D-glyceraldehyde 3-phosphate and pyruvate: step 1/1. Its function is as follows. Catalyzes the acyloin condensation reaction between C atoms 2 and 3 of pyruvate and glyceraldehyde 3-phosphate to yield 1-deoxy-D-xylulose-5-phosphate (DXP). This Histophilus somni (strain 129Pt) (Haemophilus somnus) protein is 1-deoxy-D-xylulose-5-phosphate synthase.